A 1415-amino-acid polypeptide reads, in one-letter code: DNA-directed RNA polymerase subunit beta' (1415 aa).

The Zn(2+) site is built by cysteine 70, cysteine 72, cysteine 85, and cysteine 88. Mg(2+) is bound by residues aspartate 461, aspartate 463, and aspartate 465. Zn(2+)-binding residues include cysteine 820, cysteine 894, cysteine 901, and cysteine 904. Positions 1382–1415 (ERERAQAIADEEQSLFIEPPPVVQATTEGEGDNA) are disordered.

It belongs to the RNA polymerase beta' chain family. The RNAP catalytic core consists of 2 alpha, 1 beta, 1 beta' and 1 omega subunit. When a sigma factor is associated with the core the holoenzyme is formed, which can initiate transcription. The cofactor is Mg(2+). Requires Zn(2+) as cofactor.

The catalysed reaction is RNA(n) + a ribonucleoside 5'-triphosphate = RNA(n+1) + diphosphate. In terms of biological role, DNA-dependent RNA polymerase catalyzes the transcription of DNA into RNA using the four ribonucleoside triphosphates as substrates. In Cupriavidus pinatubonensis (strain JMP 134 / LMG 1197) (Cupriavidus necator (strain JMP 134)), this protein is DNA-directed RNA polymerase subunit beta'.